The primary structure comprises 475 residues: Probable 5'-adenylylsulfate reductase 1, chloroplastic (475 aa).

The N-terminal 63 residues, 1–63, are a transit peptide targeting the chloroplast; it reads MASATASISS…AAEPARQPVS (63 aa). The segment at 72–327 is reductase domain; it reads AAPVAEDAAA…KAKECGLHKG (256 aa). Residues 341–475 enclose the Thioredoxin domain; the sequence is HKAGGANGNG…SLLAFVNSLR (135 aa). Residues Cys393 and Cys396 each act as nucleophile in the active site. A disulfide bridge links Cys393 with Cys396.

Belongs to the APS reductase family. The cofactor is [4Fe-4S] cluster.

The protein localises to the plastid. Its subcellular location is the chloroplast. The enzyme catalyses glutathione disulfide + sulfite + AMP + 2 H(+) = adenosine 5'-phosphosulfate + 2 glutathione. Its function is as follows. Reduces sulfate for Cys biosynthesis. The sequence is that of Probable 5'-adenylylsulfate reductase 1, chloroplastic (APR1) from Oryza sativa subsp. japonica (Rice).